Here is a 185-residue protein sequence, read N- to C-terminus: Elongation factor P 1 (185 aa).

Belongs to the elongation factor P family.

It localises to the cytoplasm. It participates in protein biosynthesis; polypeptide chain elongation. Functionally, involved in peptide bond synthesis. Stimulates efficient translation and peptide-bond synthesis on native or reconstituted 70S ribosomes in vitro. Probably functions indirectly by altering the affinity of the ribosome for aminoacyl-tRNA, thus increasing their reactivity as acceptors for peptidyl transferase. The chain is Elongation factor P 1 (efp1) from Chlamydia trachomatis serovar D (strain ATCC VR-885 / DSM 19411 / UW-3/Cx).